A 115-amino-acid chain; its full sequence is Divalent-cation tolerance protein CutA (115 aa).

Residues Cys19, His86, and His87 each contribute to the Cu cation site.

Belongs to the CutA family. As to quaternary structure, homotrimer. Cu cation serves as cofactor.

Its subcellular location is the cytoplasm. Its function is as follows. Involved in resistance toward heavy metals. This chain is Divalent-cation tolerance protein CutA, found in Salmonella agona (strain SL483).